Here is a 165-residue protein sequence, read N- to C-terminus: UPF0114 protein in repA1-repA2 intergenic region (165 aa).

3 consecutive transmembrane segments (helical) span residues 10 to 32 (YASRWLMFPVYIGLSFGFILLTL), 53 to 75 (LILIVLSLIDIALVGGLLVMVMF), and 136 to 155 (IMWCVIIHLTFVLSAFGMAC).

This sequence belongs to the UPF0114 family.

It localises to the cell membrane. The protein is UPF0114 protein in repA1-repA2 intergenic region of Buchnera aphidicola subsp. Geoica urticularia.